The following is an 819-amino-acid chain: DNA topoisomerase 4 subunit A (819 aa).

One can recognise a Topo IIA-type catalytic domain in the interval 30-496 (LPDIRDGLKP…QIIEIDTASL (467 aa)). Residue Tyr118 is the O-(5'-phospho-DNA)-tyrosine intermediate of the active site.

The protein belongs to the type II topoisomerase GyrA/ParC subunit family. ParC type 2 subfamily. Heterotetramer composed of ParC and ParE.

It localises to the cell membrane. The enzyme catalyses ATP-dependent breakage, passage and rejoining of double-stranded DNA.. Its function is as follows. Topoisomerase IV is essential for chromosome segregation. It relaxes supercoiled DNA. Performs the decatenation events required during the replication of a circular DNA molecule. In Streptococcus pyogenes serotype M1, this protein is DNA topoisomerase 4 subunit A.